We begin with the raw amino-acid sequence, 127 residues long: DNA-directed RNA polymerases I, II, and III subunit RPABC2 (127 aa).

The span at 1 to 34 (MSDNEDNFDGDDFDDVEEDEGLDDLENAEEEGQE) shows a compositional bias: acidic residues. The disordered stretch occupies residues 1-53 (MSDNEDNFDGDDFDDVEEDEGLDDLENAEEEGQENVEILPSGERPQANQKRIT). Residue serine 2 is modified to N-acetylserine. At serine 2 the chain carries Phosphoserine; by CK2.

Belongs to the archaeal Rpo6/eukaryotic RPB6 RNA polymerase subunit family. As to quaternary structure, component of the RNA polymerase I (Pol I), RNA polymerase II (Pol II) and RNA polymerase III (Pol III) complexes consisting of at least 13, 12 and 17 subunits, respectively. Pol I complex consists of a ten-subunit catalytic core composed of POLR1A/RPA1, POLR1B/RPA2, POLR1C/RPAC1, POLR1D/RPAC2, POLR1H/RPA12, POLR2E/RPABC1, POLR2F/RPABC2, POLR2H/RPABC3, POLR2K/RPABC4 and POLR2L/RPABC5; a mobile stalk subunit POLR1F/RPA43 protruding from the core and additional subunits homologous to general transcription factors POLR1E/RPA49 and POLR1G/RPA34. Part of Pol I pre-initiation complex (PIC), in which Pol I core assembles with RRN3 and promoter-bound UTBF and SL1/TIF-IB complex. Pol II complex contains a ten-subunit catalytic core composed of POLR2A/RPB1, POLR2B/RPB2, POLR2C/RPB3, POLR2I/RPB9, POLR2J/RPB11, POLR2E/RPABC1, POLR2F/RPABC2, POLR2H/RPABC3, POLR2K/RPABC4 and POLR2L/RPABC5 and a mobile stalk composed of two subunits POLR2D/RPB4 and POLR2G/RPB7. Part of Pol II(G) complex, in which Pol II core associates with an additional subunit POLR2M; unlike conventional Pol II, Pol II(G) functions as a transcriptional repressor. Part of TBP-based Pol II pre-initiation complex (PIC), in which Pol II core assembles with general transcription factors and other specific initiation factors including GTF2E1, GTF2E2, GTF2F1, GTF2F2, TCEA1, ERCC2, ERCC3, GTF2H2, GTF2H3, GTF2H4, GTF2H5, GTF2A1, GTF2A2, GTF2B and TBP; this large multi-subunit PIC complex mediates DNA unwinding and targets Pol II core to the transcription start site where the first phosphodiester bond forms. Pol III complex consists of a ten-subunit catalytic core composed of POLR3A/RPC1, POLR3B/RPC2, POLR1C/RPAC1, POLR1D/RPAC2, POLR3K/RPC10, POLR2E/RPABC1, POLR2F/RPABC2, POLR2H/RPABC3, POLR2K/RPABC4 and POLR2L/RPABC5; a mobile stalk composed of two subunits POLR3H/RPC8 and CRCP/RPC9, protruding from the core and functioning primarily in transcription initiation; and additional subunits homologous to general transcription factors of the RNA polymerase II machinery, POLR3C/RPC3-POLR3F/RPC6-POLR3G/RPC7 heterotrimer required for transcription initiation and POLR3D/RPC4-POLR3E/RPC5 heterodimer involved in both transcription initiation and termination.

It is found in the nucleus. Its subcellular location is the nucleolus. In terms of biological role, DNA-dependent RNA polymerase catalyzes the transcription of DNA into RNA using the four ribonucleoside triphosphates as substrates. Common component of RNA polymerases I, II, and III which synthesize ribosomal RNA precursors, mRNA precursors and many functional non-coding RNAs, and small RNAs, such as 5S rRNA and tRNAs, respectively. Pol II is the central component of the basal RNA polymerase II transcription machinery. Pols are composed of mobile elements that move relative to each other. In Pol II, POLR2F/RPABC2 is part of the clamp element and together with parts of POLR2A/RPB1 and POLR2B/RPB2 forms a pocket to which the POLR2D/RPB4-POLR2G/RPB7 subcomplex binds. This Mus musculus (Mouse) protein is DNA-directed RNA polymerases I, II, and III subunit RPABC2.